We begin with the raw amino-acid sequence, 737 residues long: Polyribonucleotide nucleotidyltransferase (737 aa).

The Mg(2+) site is built by Asp489 and Asp495. The KH domain occupies Pro556–Ile615. Residues Asp625–Lys693 form the S1 motif domain. Residues Ser691 to Glu737 form a disordered region. Positions Pro700 to Pro714 are enriched in basic and acidic residues. Positions His715–Lys724 are enriched in basic residues. Over residues Pro725 to Glu737 the composition is skewed to basic and acidic residues.

The protein belongs to the polyribonucleotide nucleotidyltransferase family. It depends on Mg(2+) as a cofactor.

The protein localises to the cytoplasm. It carries out the reaction RNA(n+1) + phosphate = RNA(n) + a ribonucleoside 5'-diphosphate. Involved in mRNA degradation. Catalyzes the phosphorolysis of single-stranded polyribonucleotides processively in the 3'- to 5'-direction. This Streptococcus pneumoniae (strain 70585) protein is Polyribonucleotide nucleotidyltransferase.